Consider the following 876-residue polypeptide: Alanine--tRNA ligase (876 aa).

At K74 the chain carries N6-acetyllysine. H564, H568, C666, and H670 together coordinate Zn(2+).

It belongs to the class-II aminoacyl-tRNA synthetase family. As to quaternary structure, homotetramer. Requires Zn(2+) as cofactor.

The protein localises to the cytoplasm. The enzyme catalyses tRNA(Ala) + L-alanine + ATP = L-alanyl-tRNA(Ala) + AMP + diphosphate. Catalyzes the attachment of alanine to tRNA(Ala) in a two-step reaction: alanine is first activated by ATP to form Ala-AMP and then transferred to the acceptor end of tRNA(Ala). Also edits incorrectly charged Ser-tRNA(Ala) and Gly-tRNA(Ala) via its editing domain. This chain is Alanine--tRNA ligase, found in Escherichia coli (strain ATCC 8739 / DSM 1576 / NBRC 3972 / NCIMB 8545 / WDCM 00012 / Crooks).